A 104-amino-acid polypeptide reads, in one-letter code: Large ribosomal subunit protein bL21 (104 aa).

This sequence belongs to the bacterial ribosomal protein bL21 family. Part of the 50S ribosomal subunit. Contacts protein L20.

Functionally, this protein binds to 23S rRNA in the presence of protein L20. The polypeptide is Large ribosomal subunit protein bL21 (Symbiobacterium thermophilum (strain DSM 24528 / JCM 14929 / IAM 14863 / T)).